Here is a 501-residue protein sequence, read N- to C-terminus: Microtubule-associated protein mmb1 (501 aa).

3 stretches are compositionally biased toward polar residues: residues 61–95 (NISS…TNNV), 103–122 (RNPS…SNNA), and 132–168 (HENS…SSNA). 3 disordered regions span residues 61 to 274 (NISS…VKVN), 328 to 381 (VSRN…TTGN), and 478 to 501 (NQTS…NRMI). A compositionally biased stretch (low complexity) spans 234-252 (SSVVRPPTRTSTTRPLSRV). Polar residues-rich tracts occupy residues 253 to 274 (NVTN…VKVN), 367 to 381 (SRIQ…TTGN), and 478 to 495 (NQTS…SSPL).

It localises to the cytoplasm. The protein localises to the cytoskeleton. Its function is as follows. Involved in the cell polarity process and in regulation of microtubule growth. Has a role in meiosis. Involved in microtubule dynamics. Binds to mitochondria and microtubules, attaching the tubular mitochondria to the microtubule lattice at multiple discrete interaction sites. The protein is Microtubule-associated protein mmb1 of Schizosaccharomyces pombe (strain 972 / ATCC 24843) (Fission yeast).